A 57-amino-acid chain; its full sequence is DNA-directed RNA polymerase subunit Rpo6 (57 aa).

This sequence belongs to the archaeal Rpo6/eukaryotic RPB6 RNA polymerase subunit family. In terms of assembly, part of the RNA polymerase complex.

It localises to the cytoplasm. The catalysed reaction is RNA(n) + a ribonucleoside 5'-triphosphate = RNA(n+1) + diphosphate. DNA-dependent RNA polymerase (RNAP) catalyzes the transcription of DNA into RNA using the four ribonucleoside triphosphates as substrates. The polypeptide is DNA-directed RNA polymerase subunit Rpo6 (Thermococcus gammatolerans (strain DSM 15229 / JCM 11827 / EJ3)).